The following is a 229-amino-acid chain: Potassium/proton antiporter CemA (229 aa).

The next 3 membrane-spanning stretches (helical) occupy residues 7–27 (FTPL…SLLF), 107–127 (ILHF…SILG), and 189–209 (IISG…KYWI).

The protein belongs to the CemA family.

The protein resides in the plastid. Its subcellular location is the chloroplast inner membrane. The catalysed reaction is K(+)(in) + H(+)(out) = K(+)(out) + H(+)(in). Its function is as follows. Contributes to K(+)/H(+) antiport activity by supporting proton efflux to control proton extrusion and homeostasis in chloroplasts in a light-dependent manner to modulate photosynthesis. Prevents excessive induction of non-photochemical quenching (NPQ) under continuous-light conditions. Indirectly promotes efficient inorganic carbon uptake into chloroplasts. This Helianthus annuus (Common sunflower) protein is Potassium/proton antiporter CemA.